The sequence spans 298 residues: Formylmethanofuran--tetrahydromethanopterin formyltransferase (298 aa).

It belongs to the FTR family. As to quaternary structure, homotetramer.

It localises to the cytoplasm. The enzyme catalyses N-formylmethanofuran + 5,6,7,8-tetrahydromethanopterin + H(+) = N(5)-formyl-5,6,7,8-tetrahydromethanopterin + methanofuran. It participates in one-carbon metabolism; formaldehyde degradation; formate from formaldehyde (H(4)MPT route): step 4/5. Its function is as follows. Catalyzes the transfer of a formyl group from 5-formyl tetrahydromethanopterin (5-formyl-H(4)MPT) to methanofuran (MFR) to produce formylmethanofuran (formyl-MFR) and tetrahydromethanopterin (H(4)MPT). The chain is Formylmethanofuran--tetrahydromethanopterin formyltransferase from Methylococcus capsulatus (strain ATCC 33009 / NCIMB 11132 / Bath).